Reading from the N-terminus, the 121-residue chain is MSAYRFRRAHRLLKTDEFSSVFSLRQQRSNAFFQVFARPNGLDHARVGLVVGKKVAKRAVRRNYIKRCVREWFRLNQQGLDGVDYVVRAKTAFTREQRAEAVTALQALFAKLARCRASSSS.

It belongs to the RnpA family. In terms of assembly, consists of a catalytic RNA component (M1 or rnpB) and a protein subunit.

The enzyme catalyses Endonucleolytic cleavage of RNA, removing 5'-extranucleotides from tRNA precursor.. In terms of biological role, RNaseP catalyzes the removal of the 5'-leader sequence from pre-tRNA to produce the mature 5'-terminus. It can also cleave other RNA substrates such as 4.5S RNA. The protein component plays an auxiliary but essential role in vivo by binding to the 5'-leader sequence and broadening the substrate specificity of the ribozyme. The sequence is that of Ribonuclease P protein component from Chromobacterium violaceum (strain ATCC 12472 / DSM 30191 / JCM 1249 / CCUG 213 / NBRC 12614 / NCIMB 9131 / NCTC 9757 / MK).